The sequence spans 1996 residues: Non-reducing polyketide synthase atnG (1996 aa).

The interval 9–245 (FLFGDQADAP…AELPAFGAVH (237 aa)) is N-terminal acylcarrier protein transacylase (SAT) domain. The Ketosynthase family 3 (KS3) domain occupies 366–794 (SGSVAVIGMS…GGNSCFVLEE (429 aa)). Catalysis depends on for beta-ketoacyl synthase activity residues Cys538, His673, and His713. The interval 891–1150 (AFAFTGQGAH…VKYTQAISHC (260 aa)) is malonyl-CoA:ACP transacylase (MAT) domain. Residue Ser982 is the For acyl/malonyl transferase activity of the active site. The interval 1263-1392 (HHLVSQDDNG…CCIRQTDEQD (130 aa)) is N-terminal hotdog fold. The region spanning 1263 to 1569 (HHLVSQDDNG…FRKMPRTTLH (307 aa)) is the PKS/mFAS DH domain. The segment at 1267-1568 (SQDDNGKEQS…RFRKMPRTTL (302 aa)) is product template (PT) domain. His1295 functions as the Proton acceptor; for dehydratase activity in the catalytic mechanism. Positions 1416 to 1569 (ASGIANRFQG…FRKMPRTTLH (154 aa)) are C-terminal hotdog fold. Asp1481 serves as the catalytic Proton donor; for dehydratase activity. Residues 1573–1621 (GKAVPPKPAKETSHPSVEATAPATTNGRSSATNAQAEAPAPPVNGSNGH) are disordered. Positions 1594-1607 (PATTNGRSSATNAQ) are enriched in polar residues. One can recognise a Carrier domain in the interval 1620-1697 (GHRKTVESVL…DAQRQLRTLE (78 aa)). O-(pantetheine 4'-phosphoryl)serine is present on Ser1657. The interval 1725-1923 (KRECNVVLMQ…ERTFVVWAKK (199 aa)) is thioesterase (TE) domain.

It functions in the pathway secondary metabolite biosynthesis; terpenoid biosynthesis. Functionally, non-reducing polyketide synthase; part of the gene cluster that mediates the biosynthesis of the meroterpenoids arthripenoids. The pathway begins with the HR-PKS atnH that catalyzes two chain-extension steps to form a reduced triketide, which then primes the SAT domain in the NR-PKS atnG to initiate three more cycles of extension to give a linear hexaketide corresponding to the polyketide part of arthripenoids. The FAD-dependent monooxygenase atnJ then performs an oxidative decarboxylation at C11 of the atnH/atnG product, via an electrophilic aromatic hydroxylation with concomitant ipso-decarboxylation. The membrane-bound polyprenyl transferase atnF then introduces a farnesyl group before the FAD-dependent monooxygenase atnK functions as the first epoxidase on terminal C12'-C13' olefin, followed by a second epoxidation on C7'-C8' catalyzed by atnA. The terpene cyclase/mutase atnI then initiates the sequential tricyclic ring formation through protonation of the terminal epoxide and catalyzes the regioselective and stereoselective 6/6/6-tricyclic ring formation. The cytochrome P450 monooxygenase atnM is responsible for hydroxylating both C1' and C10'. The next steps may involve ketoreduction and acetyl transfer by the ketoreductase atnB and the acetyltransferase atnC, and lead to the production of arthripenoid B, the final biosynthetic product of the atn cluster. The hydroquinone moiety in arthripenoid B is prone to undergo spontaneous oxidation to afford a benzoquinone compound, a key intermediate for generating structure diversity. For instance, addition of a cysteine followed by ring contraction gives arthripenoid A, tautomerization gives the main product arthripenoid C, addition of a molecular of water or amine affords arthripenoid D or E, respectively, and loss of one water forms arthripenoid F. In Arthrinium sp, this protein is Non-reducing polyketide synthase atnG.